Here is a 344-residue protein sequence, read N- to C-terminus: Lipase chaperone (344 aa).

Residues 14–34 (AMVYGVVGLAAIAGVAMWSGA) traverse the membrane as a helical segment.

The protein belongs to the lipase chaperone family.

The protein resides in the cell inner membrane. Functionally, may be involved in the folding of the extracellular lipase during its passage through the periplasm. This is Lipase chaperone from Burkholderia lata (strain ATCC 17760 / DSM 23089 / LMG 22485 / NCIMB 9086 / R18194 / 383).